A 768-amino-acid chain; its full sequence is Ral guanine nucleotide dissociation stimulator-like 1 (768 aa).

Positions Lys65 to Gln196 constitute an N-terminal Ras-GEF domain. One can recognise a Ras-GEF domain in the interval Ser232 to Ala501. Position 520 is a phosphoserine (Ser520). A disordered region spans residues Pro530–Ile623. 2 stretches are compositionally biased toward low complexity: residues Ser541–Ser561 and Glu586–Ser596. Residues Met597–Pro621 are compositionally biased toward polar residues. Positions Asp648–Ser735 constitute a Ras-associating domain.

As to quaternary structure, interacts with Ras.

Functionally, probable guanine nucleotide exchange factor. The chain is Ral guanine nucleotide dissociation stimulator-like 1 (Rgl1) from Mus musculus (Mouse).